A 375-amino-acid chain; its full sequence is tRNA-specific 2-thiouridylase MnmA (375 aa).

ATP is bound by residues G16–S23 and M42. The tract at residues N102–D104 is interaction with target base in tRNA. The active-site Nucleophile is the C107. C107 and C203 are joined by a disulfide. G131 serves as a coordination point for ATP. Residues K153–Q155 are interaction with tRNA. The active-site Cysteine persulfide intermediate is the C203. An interaction with tRNA region spans residues R315–Y316.

Belongs to the MnmA/TRMU family.

The protein resides in the cytoplasm. The catalysed reaction is S-sulfanyl-L-cysteinyl-[protein] + uridine(34) in tRNA + AH2 + ATP = 2-thiouridine(34) in tRNA + L-cysteinyl-[protein] + A + AMP + diphosphate + H(+). Catalyzes the 2-thiolation of uridine at the wobble position (U34) of tRNA, leading to the formation of s(2)U34. This chain is tRNA-specific 2-thiouridylase MnmA, found in Pseudomonas paraeruginosa (strain DSM 24068 / PA7) (Pseudomonas aeruginosa (strain PA7)).